The primary structure comprises 270 residues: Flavin-dependent thymidylate synthase (270 aa).

Residues G13 to H218 form the ThyX domain. Residues S59, R82–R84, and E90 contribute to the FAD site. DUMP contacts are provided by residues Q79–R82, E90–R94, and R157. The short motif at R82 to S92 is the ThyX motif element. Residues D173–H175 and H179 contribute to the FAD site. Residue R184 participates in dUMP binding. Residue R184 is the Involved in ionization of N3 of dUMP, leading to its activation of the active site.

The protein belongs to the thymidylate synthase ThyX family. In terms of assembly, homotetramer. FAD serves as cofactor.

It catalyses the reaction dUMP + (6R)-5,10-methylene-5,6,7,8-tetrahydrofolate + NADPH + H(+) = dTMP + (6S)-5,6,7,8-tetrahydrofolate + NADP(+). Its pathway is pyrimidine metabolism; dTTP biosynthesis. Catalyzes the reductive methylation of 2'-deoxyuridine-5'-monophosphate (dUMP) to 2'-deoxythymidine-5'-monophosphate (dTMP) while utilizing 5,10-methylenetetrahydrofolate (mTHF) as the methyl donor, and NADPH and FADH(2) as the reductant. This is Flavin-dependent thymidylate synthase from Thermus thermophilus (strain ATCC 27634 / DSM 579 / HB8).